Consider the following 107-residue polypeptide: Nucleoid-associated protein Mlg_1509 (107 aa).

This sequence belongs to the YbaB/EbfC family. Homodimer.

The protein resides in the cytoplasm. The protein localises to the nucleoid. Functionally, binds to DNA and alters its conformation. May be involved in regulation of gene expression, nucleoid organization and DNA protection. The chain is Nucleoid-associated protein Mlg_1509 from Alkalilimnicola ehrlichii (strain ATCC BAA-1101 / DSM 17681 / MLHE-1).